Here is a 160-residue protein sequence, read N- to C-terminus: 3-hydroxyacyl-[acyl-carrier-protein] dehydratase FabZ (160 aa).

The active site involves His63.

It belongs to the thioester dehydratase family. FabZ subfamily.

It is found in the cytoplasm. The catalysed reaction is a (3R)-hydroxyacyl-[ACP] = a (2E)-enoyl-[ACP] + H2O. Functionally, involved in unsaturated fatty acids biosynthesis. Catalyzes the dehydration of short chain beta-hydroxyacyl-ACPs and long chain saturated and unsaturated beta-hydroxyacyl-ACPs. In Xylella fastidiosa (strain M12), this protein is 3-hydroxyacyl-[acyl-carrier-protein] dehydratase FabZ.